The chain runs to 365 residues: Oligosaccharides import ATP-binding protein MsmX (365 aa).

The 232-residue stretch at 4–235 (LRMEHIYKFY…PENVFVGGFI (232 aa)) folds into the ABC transporter domain. Residue 37–44 (GPSGCGKS) participates in ATP binding.

The protein belongs to the ABC transporter superfamily. The complex involved in maltodextrin import is composed of two ATP-binding proteins (MsmX), two transmembrane proteins (MdxF and MdxG) and a solute-binding protein (MdxE). The complex involved in arabinooligosaccharides uptake is composed of two ATP-binding proteins (MsmX), two transmembrane proteins (AraP and AraQ) and a solute-binding protein (AraN). The complex involved in galactooligosaccharides uptake is composed of two ATP-binding proteins (MsmX), two transmembrane proteins (GanP and GanQ) and a solute-binding protein (GanS). The complex involved in melibiose, raffinose and stachyose import is composed of two ATP-binding proteins (MsmX), two transmembrane proteins (MelC and MelD) and a solute-binding protein (MelE). The complex involved in polygalacturonan and rhamnogalacturonan type I uptake is probably composed of two ATP-binding proteins (MsmX), two transmembrane proteins (YtcP and YteP) and a solute-binding protein (YtcQ).

The protein localises to the cell membrane. In terms of biological role, required to energize different ABC-type saccharide transporters. Part of the MdxEFG-MsmX ABC transporter complex involved in maltodextrin import, of the AraNPQ-MsmX complex involved in arabinooligosaccharides import, of the GanPQS-MsmX complex involved in galactooligosaccharides import, and of the MelEDC-MsmX complex involved in melibiose, raffinose and stachyose import. Is probably also part of the ABC transporter complex YtcQP-YteP-MsmX involved in polygalacturonan and rhamnogalacturonan type I import during pectin degradation. Responsible for energy coupling to the transport system. In Bacillus subtilis (strain 168), this protein is Oligosaccharides import ATP-binding protein MsmX (msmX).